Consider the following 233-residue polypeptide: Large ribosomal subunit protein eL6z (233 aa).

The tract at residues 175 to 195 (EFFEAEKEEKKEIPQEKKEDQ) is disordered.

It belongs to the eukaryotic ribosomal protein eL6 family.

In Arabidopsis thaliana (Mouse-ear cress), this protein is Large ribosomal subunit protein eL6z (RPL6A).